Here is a 146-residue protein sequence, read N- to C-terminus: UPF0178 protein BCQ_2874 (146 aa).

Belongs to the UPF0178 family.

The sequence is that of UPF0178 protein BCQ_2874 from Bacillus cereus (strain Q1).